A 248-amino-acid chain; its full sequence is 26.2 kDa heat shock protein, mitochondrial (248 aa).

The transit peptide at 1 to 32 (MASTVALKGRPLATLLRQLLAADAPPAATGRP) directs the protein to the mitochondrion. The interval 26–48 (PAATGRPVAAAPAASGKPVTAPA) is disordered. The sHSP domain maps to 139-248 (ATAAARRGGW…RKDVFQVNVE (110 aa)).

Belongs to the small heat shock protein (HSP20) family. In terms of assembly, may form oligomeric structures.

It localises to the mitochondrion. This chain is 26.2 kDa heat shock protein, mitochondrial (HSP26.2), found in Oryza sativa subsp. japonica (Rice).